The following is a 185-amino-acid chain: Potassium-transporting ATPase KdpC subunit (185 aa).

Residues 14-34 traverse the membrane as a helical segment; the sequence is ALSLLTGVAYPLALTGIAAVI. Residues 105 to 128 are disordered; that stretch reads AQNGAPAPVDAVTASGSGLDPHVS.

The protein belongs to the KdpC family. In terms of assembly, the system is composed of three essential subunits: KdpA, KdpB and KdpC.

The protein localises to the cell inner membrane. Part of the high-affinity ATP-driven potassium transport (or Kdp) system, which catalyzes the hydrolysis of ATP coupled with the electrogenic transport of potassium into the cytoplasm. This subunit acts as a catalytic chaperone that increases the ATP-binding affinity of the ATP-hydrolyzing subunit KdpB by the formation of a transient KdpB/KdpC/ATP ternary complex. This is Potassium-transporting ATPase KdpC subunit from Cereibacter sphaeroides (strain ATCC 17029 / ATH 2.4.9) (Rhodobacter sphaeroides).